The following is an 87-amino-acid chain: MFVVIFGRPGCPYCVRAKNLAEKLKGEVADFDYRYVDIHAEGITKEDLSKSVGKPVETVPQIFIDEKPIGGCTDFEALMKEQFGIVA.

Residues 1-87 (MFVVIFGRPG…LMKEQFGIVA (87 aa)) form the Glutaredoxin domain. Cysteines 11 and 14 form a disulfide.

This sequence belongs to the glutaredoxin family. Monomer.

It localises to the cytoplasm. Functionally, has a glutathione-disulfide oxidoreductase activity in the presence of NADPH and glutathione reductase. Reduces low molecular weight disulfides and proteins. This is Glutaredoxin (grxA) from Haemophilus influenzae (strain ATCC 51907 / DSM 11121 / KW20 / Rd).